The chain runs to 103 residues: Large ribosomal subunit protein bL21 (103 aa).

The protein belongs to the bacterial ribosomal protein bL21 family. In terms of assembly, part of the 50S ribosomal subunit. Contacts protein L20.

Functionally, this protein binds to 23S rRNA in the presence of protein L20. The protein is Large ribosomal subunit protein bL21 of Pseudomonas paraeruginosa (strain DSM 24068 / PA7) (Pseudomonas aeruginosa (strain PA7)).